The chain runs to 430 residues: 4-hydroxy-3-methylbut-2-en-1-yl diphosphate synthase (flavodoxin) (430 aa).

[4Fe-4S] cluster contacts are provided by Cys-310, Cys-313, Cys-356, and Glu-363.

It belongs to the IspG family. The cofactor is [4Fe-4S] cluster.

It carries out the reaction (2E)-4-hydroxy-3-methylbut-2-enyl diphosphate + oxidized [flavodoxin] + H2O + 2 H(+) = 2-C-methyl-D-erythritol 2,4-cyclic diphosphate + reduced [flavodoxin]. It functions in the pathway isoprenoid biosynthesis; isopentenyl diphosphate biosynthesis via DXP pathway; isopentenyl diphosphate from 1-deoxy-D-xylulose 5-phosphate: step 5/6. Functionally, converts 2C-methyl-D-erythritol 2,4-cyclodiphosphate (ME-2,4cPP) into 1-hydroxy-2-methyl-2-(E)-butenyl 4-diphosphate. This Nitrobacter winogradskyi (strain ATCC 25391 / DSM 10237 / CIP 104748 / NCIMB 11846 / Nb-255) protein is 4-hydroxy-3-methylbut-2-en-1-yl diphosphate synthase (flavodoxin).